Reading from the N-terminus, the 248-residue chain is Proteasome subunit alpha type-7 (248 aa).

Ser-130 is a glycosylation site (O-linked (GlcNAc) serine). A Phosphotyrosine; by ABL1 and ABL2 modification is found at Tyr-153. An N6-acetyllysine modification is found at Lys-227.

It belongs to the peptidase T1A family. In terms of assembly, the 26S proteasome consists of a 20S proteasome core and two 19S regulatory subunits. The 20S proteasome core is a barrel-shaped complex made of 28 subunits that are arranged in four stacked rings. The two outer rings are each formed by seven alpha subunits, and the two inner rings are formed by seven beta subunits. The proteolytic activity is exerted by three beta-subunits PSMB5, PSMB6 and PSMB7. PSMA7 interacts directly with the PSMG1-PSMG2 heterodimer which promotes 20S proteasome assembly. Interacts with HIF1A. Interacts with RAB7A. Interacts with PRKN. Interacts with ABL1 and ABL2. Interacts with EMAP2. Interacts with MAVS. In terms of processing, phosphorylation by ABL1 or ABL2 leads to an inhibition of proteasomal activity and cell cycle transition blocks. As to expression, detected in liver (at protein level).

Its subcellular location is the cytoplasm. It localises to the nucleus. Its function is as follows. Component of the 20S core proteasome complex involved in the proteolytic degradation of most intracellular proteins. This complex plays numerous essential roles within the cell by associating with different regulatory particles. Associated with two 19S regulatory particles, forms the 26S proteasome and thus participates in the ATP-dependent degradation of ubiquitinated proteins. The 26S proteasome plays a key role in the maintenance of protein homeostasis by removing misfolded or damaged proteins that could impair cellular functions, and by removing proteins whose functions are no longer required. Associated with the PA200 or PA28, the 20S proteasome mediates ubiquitin-independent protein degradation. This type of proteolysis is required in several pathways including spermatogenesis (20S-PA200 complex) or generation of a subset of MHC class I-presented antigenic peptides (20S-PA28 complex). The polypeptide is Proteasome subunit alpha type-7 (Psma7) (Mus musculus (Mouse)).